A 96-amino-acid chain; its full sequence is Large ribosomal subunit protein bL21 (96 aa).

The protein belongs to the bacterial ribosomal protein bL21 family. In terms of assembly, part of the 50S ribosomal subunit. Contacts protein L20.

Functionally, this protein binds to 23S rRNA in the presence of protein L20. In Chlorobium phaeobacteroides (strain BS1), this protein is Large ribosomal subunit protein bL21.